We begin with the raw amino-acid sequence, 190 residues long: UPF0232 protein SCO3875 (190 aa).

Disordered regions lie at residues 1–70 (MSAD…GRDP) and 163–190 (GPGGPGGPGRRYGPLRAPGSQGPGDTYG). The segment covering 26-35 (GVDLARVALR) has biased composition (low complexity). Residues 36–45 (AAREAARARG) are compositionally biased toward basic and acidic residues. Gly residues predominate over residues 163–172 (GPGGPGGPGR).

Belongs to the UPF0232 family.

The sequence is that of UPF0232 protein SCO3875 from Streptomyces coelicolor (strain ATCC BAA-471 / A3(2) / M145).